The primary structure comprises 299 residues: Zinc-alpha-2-glycoprotein (299 aa).

An N-terminal signal peptide occupies residues 1–17; that stretch reads MVPVLLALLLLLGPAVS. N-linked (GlcNAc...) asparagine glycans are attached at residues Asn-24, Asn-125, and Asn-256. 2 disulfide bridges follow: Cys-120–Cys-183 and Cys-222–Cys-277. The Ig-like C1-type domain occupies 204–289; that stretch reads PSVSVTGHAA…EHRSLTRPLT (86 aa).

Belongs to the MHC class I family. As to quaternary structure, interacts with PIP.

The protein resides in the secreted. In terms of biological role, stimulates lipid degradation in adipocytes and causes the extensive fat losses associated with some advanced cancers. This Bos taurus (Bovine) protein is Zinc-alpha-2-glycoprotein (AZGP1).